The chain runs to 672 residues: Glycine--tRNA ligase beta subunit (672 aa).

This sequence belongs to the class-II aminoacyl-tRNA synthetase family. In terms of assembly, tetramer of two alpha and two beta subunits.

It is found in the cytoplasm. It catalyses the reaction tRNA(Gly) + glycine + ATP = glycyl-tRNA(Gly) + AMP + diphosphate. In Thermotoga maritima (strain ATCC 43589 / DSM 3109 / JCM 10099 / NBRC 100826 / MSB8), this protein is Glycine--tRNA ligase beta subunit (glyS).